Consider the following 391-residue polypeptide: Protein kinase ORF14 (391 aa).

The region spanning 109 to 391 is the Protein kinase domain; sequence VPLRHTRGNI…ETLVDEFSKI (283 aa). An ATP-binding site is contributed by lysine 134. Aspartate 235 (proton acceptor) is an active-site residue.

It belongs to the protein kinase superfamily. Ser/Thr protein kinase family.

The enzyme catalyses L-seryl-[protein] + ATP = O-phospho-L-seryl-[protein] + ADP + H(+). It catalyses the reaction L-threonyl-[protein] + ATP = O-phospho-L-threonyl-[protein] + ADP + H(+). This is Protein kinase ORF14 (ORF14) from Ictalurid herpesvirus 1 (strain Auburn) (IcHV-1).